A 725-amino-acid polypeptide reads, in one-letter code: Catalase-peroxidase (725 aa).

Positions 1–20 (MSSEAKCPFPHAANRSRSNQ) are disordered. Positions 91–215 (WHATGTYRTM…LSATHMGLIY (125 aa)) form a cross-link, tryptophyl-tyrosyl-methioninium (Trp-Tyr) (with M-241). The Proton acceptor role is filled by His92. The segment at residues 215–241 (YVNPEGPDGSGDYMAAAKDIRATFYRM) is a cross-link (tryptophyl-tyrosyl-methioninium (Tyr-Met) (with W-91)). Residue His256 coordinates heme b.

Belongs to the peroxidase family. Peroxidase/catalase subfamily. Homodimer or homotetramer. The cofactor is heme b. Post-translationally, formation of the three residue Trp-Tyr-Met cross-link is important for the catalase, but not the peroxidase activity of the enzyme.

It catalyses the reaction H2O2 + AH2 = A + 2 H2O. The enzyme catalyses 2 H2O2 = O2 + 2 H2O. In terms of biological role, bifunctional enzyme with both catalase and broad-spectrum peroxidase activity. The polypeptide is Catalase-peroxidase (Janthinobacterium sp. (strain Marseille) (Minibacterium massiliensis)).